Consider the following 238-residue polypeptide: Probable transcriptional regulatory protein SSU98_0387 (238 aa).

This sequence belongs to the TACO1 family. YeeN subfamily.

It is found in the cytoplasm. The protein is Probable transcriptional regulatory protein SSU98_0387 of Streptococcus suis (strain 98HAH33).